The primary structure comprises 66 residues: uncharacterized protein (66 aa).

This is an uncharacterized protein from Escherichia coli O157:H7.